Reading from the N-terminus, the 439-residue chain is Gnt-II system L-idonate transporter (439 aa).

Residues 1–11 (MPLIIIAAGVA) lie on the Periplasmic side of the membrane. A helical transmembrane segment spans residues 12-34 (LLLILMIGFKVNGFIALVLVAAV). Residues 35–53 (VGFAEGMDAQAVLHSIQNG) are Cytoplasmic-facing. A helical transmembrane segment spans residues 54 to 76 (IGSTLGGLAMILGFGAMLGKLIS). Topologically, residues 77–96 (DTGAAQRIATTLIATFGKKR) are periplasmic. Residues 97 to 114 (VQWALVITGLVVGLAMFF) traverse the membrane as a helical segment. Topologically, residues 115 to 118 (EVGF) are cytoplasmic. The chain crosses the membrane as a helical span at residues 119-141 (VLLLPLVFTIVASSGLPLLYVGV). Residues 142–170 (PMVAALSVTHCFLPPHPGPTAIATIFEAN) lie on the Periplasmic side of the membrane. The helical transmembrane segment at 171 to 193 (LGTTLLYGFIITIPTVIVAGPLF) threads the bilayer. The Cytoplasmic segment spans residues 194–218 (SKLLTRFEKAPPEGLFNPHLFSEEE). Residues 219-241 (MPSFWNSIFAAVIPVILMAIAAV) form a helical membrane-spanning segment. The Periplasmic segment spans residues 242-253 (CEITLPKTNTVR). A helical transmembrane segment spans residues 254–276 (LFFEFVGNPAVALFIAIVIAIFT). Residues 277-290 (LGRRNGRTIEQIMD) lie on the Cytoplasmic side of the membrane. The chain crosses the membrane as a helical span at residues 291–310 (IIGDSIGAIAMIVFIIAGGG). The Periplasmic segment spans residues 311-322 (AFKQVLVDSGVG). A helical membrane pass occupies residues 323–345 (HYISHLMTGTTLSPLLMCWTVAA). At 346–348 (LLR) the chain is on the cytoplasmic side. Residues 349-371 (IALGSATVAAITTAGVVLPIINV) form a helical membrane-spanning segment. Topologically, residues 372 to 377 (THADPA) are periplasmic. A helical transmembrane segment spans residues 378–400 (LMVLATGAGSVIASHVNDPGFWL). At 401–414 (FKGYFNLTVGETLR) the chain is on the cytoplasmic side. The helical transmembrane segment at 415 to 437 (TWTVMETLISIMGLLGVLAINAV) threads the bilayer. Residues 438 to 439 (LH) lie on the Periplasmic side of the membrane.

The protein belongs to the GntP permease family.

It localises to the cell inner membrane. The enzyme catalyses L-idonate(in) + H(+)(in) = L-idonate(out) + H(+)(out). It catalyses the reaction D-gluconate(in) + H(+)(in) = D-gluconate(out) + H(+)(out). The catalysed reaction is 5-dehydro-D-gluconate(in) + H(+)(in) = 5-dehydro-D-gluconate(out) + H(+)(out). The protein operates within carbohydrate acid metabolism; L-idonate degradation. Functionally, transporter which is probably involved in L-idonate metabolism. Transports L-idonate from the periplasm across the inner membrane. Can also transport D-gluconate and 5-keto-D-gluconate. It has been reported that gluconate uptake probably occurs via a proton-symport mechanism in E.coli. This is Gnt-II system L-idonate transporter from Escherichia coli (strain K12).